The sequence spans 288 residues: ATP synthase gamma chain (288 aa).

It belongs to the ATPase gamma chain family. F-type ATPases have 2 components, CF(1) - the catalytic core - and CF(0) - the membrane proton channel. CF(1) has five subunits: alpha(3), beta(3), gamma(1), delta(1), epsilon(1). CF(0) has three main subunits: a, b and c.

It localises to the cell inner membrane. Functionally, produces ATP from ADP in the presence of a proton gradient across the membrane. The gamma chain is believed to be important in regulating ATPase activity and the flow of protons through the CF(0) complex. This is ATP synthase gamma chain from Laribacter hongkongensis (strain HLHK9).